A 234-amino-acid polypeptide reads, in one-letter code: Leucyl/phenylalanyl-tRNA--protein transferase (234 aa).

The protein belongs to the L/F-transferase family.

Its subcellular location is the cytoplasm. The enzyme catalyses N-terminal L-lysyl-[protein] + L-leucyl-tRNA(Leu) = N-terminal L-leucyl-L-lysyl-[protein] + tRNA(Leu) + H(+). It catalyses the reaction N-terminal L-arginyl-[protein] + L-leucyl-tRNA(Leu) = N-terminal L-leucyl-L-arginyl-[protein] + tRNA(Leu) + H(+). The catalysed reaction is L-phenylalanyl-tRNA(Phe) + an N-terminal L-alpha-aminoacyl-[protein] = an N-terminal L-phenylalanyl-L-alpha-aminoacyl-[protein] + tRNA(Phe). Functionally, functions in the N-end rule pathway of protein degradation where it conjugates Leu, Phe and, less efficiently, Met from aminoacyl-tRNAs to the N-termini of proteins containing an N-terminal arginine or lysine. In Nitratidesulfovibrio vulgaris (strain ATCC 29579 / DSM 644 / CCUG 34227 / NCIMB 8303 / VKM B-1760 / Hildenborough) (Desulfovibrio vulgaris), this protein is Leucyl/phenylalanyl-tRNA--protein transferase.